A 493-amino-acid polypeptide reads, in one-letter code: Lysine--tRNA ligase (493 aa).

The Mg(2+) site is built by Glu402 and Glu409.

This sequence belongs to the class-II aminoacyl-tRNA synthetase family. As to quaternary structure, homodimer. Mg(2+) is required as a cofactor.

It is found in the cytoplasm. It catalyses the reaction tRNA(Lys) + L-lysine + ATP = L-lysyl-tRNA(Lys) + AMP + diphosphate. This Ureaplasma parvum serovar 3 (strain ATCC 27815 / 27 / NCTC 11736) protein is Lysine--tRNA ligase.